The chain runs to 470 residues: PTS system trehalose-specific EIIBC component (470 aa).

Positions 1 to 88 constitute a PTS EIIB type-1 domain; that stretch reads MGELNKSARQ…VKETGIGEST (88 aa). The Phosphocysteine intermediate; for EIIB activity role is filled by Cys27. Cys27 carries the phosphocysteine; by EIIA modification. A PTS EIIC type-1 domain is found at 108 to 470; it reads KTLADIFIPI…TYAYARFKHK (363 aa). The next 10 membrane-spanning stretches (helical) occupy residues 110-130, 160-180, 183-203, 234-254, 263-283, 301-321, 326-346, 347-367, 403-423, and 443-463; these read LADI…LMGI, INLI…WSAV, FGGN…PDLL, GQVL…VFLT, LLVV…IIIG, FGSF…ALVI, HTFL…TFLW, PMLA…MFIV, FIIA…QGVL, and WGAF…GTYA.

Its subcellular location is the cell membrane. It carries out the reaction alpha,alpha-trehalose(out) + N(pros)-phospho-L-histidyl-[protein] = alpha,alpha-trehalose 6-phosphate(in) + L-histidyl-[protein]. In terms of biological role, the phosphoenolpyruvate-dependent sugar phosphotransferase system (sugar PTS), a major carbohydrate active transport system, catalyzes the phosphorylation of incoming sugar substrates concomitantly with their translocation across the cell membrane. This system is involved in trehalose transport. This is PTS system trehalose-specific EIIBC component (treP) from Bacillus subtilis (strain 168).